The primary structure comprises 225 residues: Cytidylate kinase (225 aa).

11–19 (GPAGAGKGT) contacts ATP. The span at 169 to 185 (MDRIKSRIEERDARDQS) shows a compositional bias: basic and acidic residues. The tract at residues 169-195 (MDRIKSRIEERDARDQSRATAPLAAAP) is disordered.

This sequence belongs to the cytidylate kinase family. Type 1 subfamily.

Its subcellular location is the cytoplasm. The enzyme catalyses CMP + ATP = CDP + ADP. The catalysed reaction is dCMP + ATP = dCDP + ADP. This is Cytidylate kinase from Magnetococcus marinus (strain ATCC BAA-1437 / JCM 17883 / MC-1).